Here is a 525-residue protein sequence, read N- to C-terminus: Cytochrome P450 4V2 (525 aa).

A helical membrane pass occupies residues 13–33; that stretch reads LLLWGAASALSLAGASLVLSL. Heme-binding residues include Glu329 and Cys467.

The protein belongs to the cytochrome P450 family. Heme serves as cofactor. In terms of tissue distribution, broadly expressed. Detected in heart, brain, placenta, lung, liver, skeletal muscle, kidney, pancreas, retina, retinal pigment epithelium (RPE) and lymphocytes.

Its subcellular location is the endoplasmic reticulum membrane. The catalysed reaction is dodecanoate + reduced [NADPH--hemoprotein reductase] + O2 = 12-hydroxydodecanoate + oxidized [NADPH--hemoprotein reductase] + H2O + H(+). It catalyses the reaction tetradecanoate + reduced [NADPH--hemoprotein reductase] + O2 = 14-hydroxytetradecanoate + oxidized [NADPH--hemoprotein reductase] + H2O + H(+). It carries out the reaction hexadecanoate + reduced [NADPH--hemoprotein reductase] + O2 = 16-hydroxyhexadecanoate + oxidized [NADPH--hemoprotein reductase] + H2O + H(+). The enzyme catalyses (5Z,8Z,11Z,14Z,17Z)-eicosapentaenoate + reduced [NADPH--hemoprotein reductase] + O2 = 20-hydroxy-(5Z,8Z,11Z,14Z,17Z)-eicosapentaenoate + oxidized [NADPH--hemoprotein reductase] + H2O + H(+). The catalysed reaction is (4Z,7Z,10Z,13Z,16Z,19Z)-docosahexaenoate + reduced [NADPH--hemoprotein reductase] + O2 = 22-hydroxy-(4Z,7Z,10Z,13Z,16Z,19Z)-docosahexaenoate + oxidized [NADPH--hemoprotein reductase] + H2O + H(+). Its pathway is lipid metabolism; fatty acid metabolism. Its activity is regulated as follows. Inhibited by N-hydroxy-N'-(4-n-butyl-2-methylphenyl formamidine)(HET0016) with an IC(50) of 38 nM. A cytochrome P450 monooxygenase involved in fatty acid metabolism in the eye. Catalyzes the omega-hydroxylation of polyunsaturated fatty acids (PUFAs) docosahexaenoate (DHA) and its precursor eicosapentaenoate (EPA), and may contribute to the homeostasis of these retinal PUFAs. Omega hydroxylates saturated fatty acids such as laurate, myristate and palmitate, the catalytic efficiency decreasing in the following order: myristate &gt; laurate &gt; palmitate (C14&gt;C12&gt;C16). Mechanistically, uses molecular oxygen inserting one oxygen atom into a substrate, and reducing the second into a water molecule, with two electrons provided by NADPH via cytochrome P450 reductase (CPR; NADPH-ferrihemoprotein reductase). The chain is Cytochrome P450 4V2 (CYP4V2) from Homo sapiens (Human).